The primary structure comprises 377 residues: Leukocyte elastase inhibitor (377 aa).

Met1 bears the N-acetylmethionine mark.

This sequence belongs to the serpin family. Ov-serpin subfamily.

Its subcellular location is the cytoplasm. Functionally, regulates the activity of the neutrophil proteases. The chain is Leukocyte elastase inhibitor (serpinb1) from Xenopus tropicalis (Western clawed frog).